We begin with the raw amino-acid sequence, 117 residues long: Non-specific lipid-transfer protein 1 (117 aa).

The signal sequence occupies residues 1–26; that stretch reads MAYSAMTKLALVVALCMVVSVPIAQA. Intrachain disulfides connect Cys29–Cys76, Cys39–Cys53, Cys54–Cys99, and Cys74–Cys113.

The protein belongs to the plant LTP family.

In terms of biological role, plant non-specific lipid-transfer proteins transfer phospholipids as well as galactolipids across membranes. May play a role in wax or cutin deposition in the cell walls of expanding epidermal cells and certain secretory tissues. The chain is Non-specific lipid-transfer protein 1 from Prunus dulcis (Almond).